A 290-amino-acid polypeptide reads, in one-letter code: ATP synthase gamma chain (290 aa).

Belongs to the ATPase gamma chain family. As to quaternary structure, F-type ATPases have 2 components, CF(1) - the catalytic core - and CF(0) - the membrane proton channel. CF(1) has five subunits: alpha(3), beta(3), gamma(1), delta(1), epsilon(1). CF(0) has three main subunits: a, b and c.

The protein resides in the cell inner membrane. Its function is as follows. Produces ATP from ADP in the presence of a proton gradient across the membrane. The gamma chain is believed to be important in regulating ATPase activity and the flow of protons through the CF(0) complex. This is ATP synthase gamma chain from Phenylobacterium zucineum (strain HLK1).